Reading from the N-terminus, the 388-residue chain is Pepsin A-2/A-3 (388 aa).

Positions 1–15 (MKWLLLLGLVALSEC) are cleaved as a signal peptide. 2 consecutive propeptides (activation peptide) follow at residues 16 to 40 (IIHK…LLKD) and 41 to 62 (FLKK…APTL). Positions 76-385 (YFGTIGIGTP…DRANNQVGLA (310 aa)) constitute a Peptidase A1 domain. Asp-94 is an active-site residue. Cys-107 and Cys-112 are oxidised to a cystine. Ser-130 bears the Phosphoserine mark. Residues Cys-268 and Cys-272 are joined by a disulfide bond. Residue Asp-277 is part of the active site. Cys-311 and Cys-344 are oxidised to a cystine.

It belongs to the peptidase A1 family. In terms of processing, pepsin A-2 is phosphorylated, but not pepsin A-3. Post-translationally, each pepsinogen is converted to corresponding pepsin at pH 2.0 in part as a result of the release of a 47 AA activation segment and in part as a result of stepwise proteolytic cleavage via an intermediate form(s).

Its subcellular location is the secreted. The catalysed reaction is Preferential cleavage: hydrophobic, preferably aromatic, residues in P1 and P1' positions. Cleaves 1-Phe-|-Val-2, 4-Gln-|-His-5, 13-Glu-|-Ala-14, 14-Ala-|-Leu-15, 15-Leu-|-Tyr-16, 16-Tyr-|-Leu-17, 23-Gly-|-Phe-24, 24-Phe-|-Phe-25 and 25-Phe-|-Tyr-26 bonds in the B chain of insulin.. Shows particularly broad specificity; although bonds involving phenylalanine and leucine are preferred, many others are also cleaved to some extent. The sequence is that of Pepsin A-2/A-3 from Macaca fuscata fuscata (Japanese macaque).